The chain runs to 324 residues: Virulence-associated V antigen (324 aa).

It localises to the secreted. In terms of biological role, possibly involved in calcium regulation of YOP expression, which includes the export process. In Yersinia pestis (strain Pestoides F), this protein is Virulence-associated V antigen (lcrV).